A 264-amino-acid chain; its full sequence is 3-methyl-2-oxobutanoate hydroxymethyltransferase (264 aa).

Residues Asp-45 and Asp-84 each contribute to the Mg(2+) site. 3-methyl-2-oxobutanoate contacts are provided by residues 45–46, Asp-84, and Lys-112; that span reads DS. Residue Glu-114 coordinates Mg(2+). Glu-181 functions as the Proton acceptor in the catalytic mechanism.

This sequence belongs to the PanB family. Homodecamer; pentamer of dimers. The cofactor is Mg(2+).

The protein resides in the cytoplasm. The catalysed reaction is 3-methyl-2-oxobutanoate + (6R)-5,10-methylene-5,6,7,8-tetrahydrofolate + H2O = 2-dehydropantoate + (6S)-5,6,7,8-tetrahydrofolate. It participates in cofactor biosynthesis; (R)-pantothenate biosynthesis; (R)-pantoate from 3-methyl-2-oxobutanoate: step 1/2. In terms of biological role, catalyzes the reversible reaction in which hydroxymethyl group from 5,10-methylenetetrahydrofolate is transferred onto alpha-ketoisovalerate to form ketopantoate. The protein is 3-methyl-2-oxobutanoate hydroxymethyltransferase of Shewanella loihica (strain ATCC BAA-1088 / PV-4).